A 317-amino-acid chain; its full sequence is Homoserine kinase (317 aa).

An ATP-binding site is contributed by 95–105 (PHSRGLGSSAA).

This sequence belongs to the GHMP kinase family. Homoserine kinase subfamily.

The protein resides in the cytoplasm. The enzyme catalyses L-homoserine + ATP = O-phospho-L-homoserine + ADP + H(+). It participates in amino-acid biosynthesis; L-threonine biosynthesis; L-threonine from L-aspartate: step 4/5. Functionally, catalyzes the ATP-dependent phosphorylation of L-homoserine to L-homoserine phosphate. This Mycolicibacterium smegmatis (strain ATCC 700084 / mc(2)155) (Mycobacterium smegmatis) protein is Homoserine kinase.